A 1496-amino-acid polypeptide reads, in one-letter code: MALSKGLRLLGRLGAEGDCSVLLEARGRDDCLLFEAGTVATLAPEEKEVIKGQYGKLTDAYGCLGELRLKSGGTSLSFLVLVTGCTSVGRIPDAEIYKITATDFYPLQEEAKEEERLIALKKILSSGVFYFSWPNDGSRFDLTVRTQKQGDDSSEWGNSFFWNQLLHVPLRQHQVSCCDWLLKIICGVVTIRTVYASHKQAKACLVSRVSCERTGTRFHTRGVNDDGHVSNFVETEQMIYMDDGVSSFVQIRGSVPLFWEQPGLQVGSHHLRLHRGLEANAPAFDRHMVLLKEQYGQQVVVNLLGSRGGEEVLNRAFKKLLWASCHAGDTPMINFDFHQFAKGGKLEKLETLLRPQLKLHWEDFDVFTKGENVSPRFQKGTLRMNCLDCLDRTNTVQSFIALEVLHLQLKTLGLSSKPIVDRFVESFKAMWSLNGHSLSKVFTGSRALEGKAKVGKLKDGARSMSRTIQSNFFDGVKQEAIKLLLVGDVYGEEVADKGGMLLDSTALLVTPRILKAMTERQSEFTNFKRIRIAMGTWNVNGGKQFRSNVLRTAELTDWLLDSPQLSGATDSQDDSSPADIFAVGFEEMVELSAGNIVNASTTNKKMWGEQLQKAISRSHRYILLTSAQLVGVCLYIFVRPYHVPFIRDVAIDTVKTGMGGKAGNKGAVGIRFQFHSTSFCFICSHLTAGQSQVKERNEDYKEITQKLCFPMGRNVFSHDYVFWCGDFNYRIDLTYEEVFYFVKRQDWKKLLEFDQLQLQKSSGKIFKDFHEGAINFGPTYKYDVGSAAYDTSDKCRTPAWTDRVLWWRKKHPFDKTAGELNLLDSDLDVDTKVRHTWSPGALQYYGRAELQASDHRPVLAIVEVEVQEVDVGARERVFQEVSSFQGPLDATVVVNLQSPTLEEKNEFPEDLRTELMQTLGSYGTIVLVRINQGQMLVTFADSHSALSVLDVDGMKVKGRAVKIRPKTKDWLKGLREEIIRKRDSMAPVSPTANSCLLEENFDFTSLDYESEGDILEDDEDYLVDEFNQPGVSDSELGGDDLSDVPGPTALAPPSKSPALTKKKQHPTYKDDADLVELKRELEAVGEFRHRSPSRSLSVPNRPRPPQPPQRPPPPTGLMVKKSASDASISSGTHGQYSILQTARLLPGAPQQPPKARTGISKPYNVKQIKTTNAQEAEAAIRCLLEARGGASEEALSAVAPRDLEASSEPEPTPGAAKPETPQAPPLLPRRPPPRVPAIKKPTLRRTGKPLSPEEQFEQQTVHFTIGPPETSVEAPPVVTAPRVPPVPKPRTFQPGKAAERPSHRKPASDEAPPGAGASVPPPLEAPPLVPKVPPRRKKSAPAAFHLQVLQSNSQLLQGLTYNSSDSPSGHPPAAGTVFPQGDFLSTSSATSPDSDGTKAMKPEAAPLLGDYQDPFWNLLHHPKLLNNTWLSKSSDPLDSGTRSPKRDPIDPVSAGASAAKAELPPDHEHKTLGHWVTISDQEKRTALQVFDPLAKT.

The 325-residue stretch at 120 to 444 (LKKILSSGVF…GHSLSKVFTG (325 aa)) folds into the SAC domain. In terms of domain architecture, RRM spans 889-968 (DATVVVNLQS…RAVKIRPKTK (80 aa)). Disordered stretches follow at residues 1027–1073 (NQPG…DDAD), 1085–1166 (GEFR…YNVK), 1190–1405 (ASEE…PEAA), and 1427–1473 (NTWL…KTLG). Over residues 1101–1115 (RPRPPQPPQRPPPPT) the composition is skewed to pro residues. Ser-1124 and Ser-1191 each carry phosphoserine. The span at 1124–1140 (SDASISSGTHGQYSILQ) shows a compositional bias: polar residues. 2 stretches are compositionally biased toward pro residues: residues 1221–1235 (PQAP…PPRV) and 1319–1332 (VPPP…VPKV). The span at 1340–1359 (APAAFHLQVLQSNSQLLQGL) shows a compositional bias: low complexity. 2 stretches are compositionally biased toward polar residues: residues 1383–1394 (FLSTSSATSPDS) and 1427–1442 (NTWL…SGTR).

This sequence belongs to the synaptojanin family. It in the central section; belongs to the inositol 1,4,5-trisphosphate 5-phosphatase family. In terms of assembly, binds to GRB2. Isoform 2A binds to SYNJ2BP/OMP25. Isoform 2B2 C-terminal proline-rich region binds to a variety of SH3 domain-containing proteins including SH3GL1, SH3GL2, SH3GL3 and GRB2.

It localises to the cytoplasm. The protein resides in the cell membrane. The protein localises to the membrane raft. Its subcellular location is the presynapse. It is found in the cytoskeleton. It carries out the reaction a 1,2-diacyl-sn-glycero-3-phospho-(1D-myo-inositol-4,5-bisphosphate) + H2O = a 1,2-diacyl-sn-glycero-3-phospho-(1D-myo-inositol 4-phosphate) + phosphate. In terms of biological role, inositol 5-phosphatase which may be involved in distinct membrane trafficking and signal transduction pathways. May mediate the inhibitory effect of Rac1 on endocytosis. This Homo sapiens (Human) protein is Synaptojanin-2 (SYNJ2).